Here is a 205-residue protein sequence, read N- to C-terminus: Arginine exporter protein ArgO (205 aa).

6 helical membrane passes run 1–21 (MLAVYLHGFILSAAMILPLGP), 42–62 (LCALSDIILICAGIFGGSALL), 67–87 (LLLALVTWGGVAFLMWYGWGA), 111–131 (ILVTLLAVTWLNPHVYLDTFV), 147–167 (WFALGAVTASIVWFFALAFLA), and 185–205 (LFVGGVMGFIAFQLARQGFGL).

The protein belongs to the LysE/ArgO transporter (TC 2.A.75) family.

It localises to the cell inner membrane. It carries out the reaction L-arginine(in) = L-arginine(out). Its function is as follows. Involved in the export of arginine. Important to control the intracellular level of arginine and the correct balance between arginine and lysine. This chain is Arginine exporter protein ArgO, found in Yersinia pseudotuberculosis serotype O:3 (strain YPIII).